The chain runs to 150 residues: Putative esterase VC_A0580 (150 aa).

This sequence belongs to the thioesterase PaaI family.

The polypeptide is Putative esterase VC_A0580 (Vibrio cholerae serotype O1 (strain ATCC 39315 / El Tor Inaba N16961)).